Reading from the N-terminus, the 585-residue chain is Zinc finger protein 496 (585 aa).

The interval 1–41 (MPTALCPRVLAPKESEEPRKMRSPPGENPSPQGEPPSPESS) is disordered. The segment covering 11-20 (APKESEEPRK) has biased composition (basic and acidic residues). Lys13 is covalently cross-linked (Glycyl lysine isopeptide (Lys-Gly) (interchain with G-Cter in SUMO2)). Residues 26–38 (GENPSPQGEPPSP) are compositionally biased toward pro residues. The 83-residue stretch at 42–124 (RRLFRRFRYQ…AAVEALEREP (83 aa)) folds into the SCAN box domain. Residues 141-167 (DDGDGPAAPQDLEQERMSAESQSYPDA) are disordered. The residue at position 182 (Ser182) is a Phosphoserine. The 75-residue stretch at 220 to 294 (SPFKDMILCF…DLQDKEIPQA (75 aa)) folds into the KRAB domain. The segment at 358 to 397 (SSSGDEDSQHSPYCTEELRSPPEDLHSVPAHQSNASAEGE) is disordered. Residues 373–383 (EELRSPPEDLH) show a composition bias toward basic and acidic residues. Over residues 387 to 397 (AHQSNASAEGE) the composition is skewed to polar residues. The C2H2-type 1; degenerate zinc-finger motif lies at 405–427 (YVCPNCGKIFRWRVNFIRHLRSR). 2 consecutive C2H2-type zinc fingers follow at residues 433–455 (HKCSVCGELFSDSEDLDGHLETH) and 461–483 (YRCTACGKSFRLNSHLISHRRIH). Residues 483-506 (HLQPASQQPMKKSEEEALETEGTG) are disordered. Lys494 is covalently cross-linked (Glycyl lysine isopeptide (Lys-Gly) (interchain with G-Cter in SUMO2)). 2 C2H2-type zinc fingers span residues 520–543 (FQCGDCEKSFQRHDHLVRHRRHCH) and 551–573 (FQCRYCVKTFRQNYDLLRHERLH). Positions 575–579 (KRRSK) match the Nuclear localization signal motif.

This sequence belongs to the krueppel C2H2-type zinc-finger protein family. As to quaternary structure, interacts (via zinc-fingers) with JARID2. Interacts with NSD1.

It localises to the nucleus. Its function is as follows. DNA-binding transcription factor that can both act as an activator and a repressor. This Mus musculus (Mouse) protein is Zinc finger protein 496 (Znf496).